The sequence spans 360 residues: Ferredoxin--NADP reductase, leaf isozyme 1, chloroplastic (360 aa).

Residues 1-49 constitute a chloroplast transit peptide; it reads MAAAISAAVSLPSSKSSSLLTKISSVSPQRIFLKKSTVCYRRVVSVKAQ. Residues 81–203 enclose the FAD-binding FR-type domain; that stretch reads KNPYTGRCLL…TGPVGKEMLM (123 aa). FAD contacts are provided by residues 139–142, 160–162, Y166, and 177–179; these read RLYS, CVK, and VCS. Residues S142 and K162 each contribute to the NADP(+) site. C178 and C183 are disulfide-bonded. At S179 the chain carries Phosphoserine. Phosphothreonine is present on T210. T218 is a binding site for FAD. Residues T218, 250 to 251, 280 to 281, K290, 319 to 320, and E358 contribute to the NADP(+) site; these read VP, SR, and GL.

Belongs to the ferredoxin--NADP reductase type 1 family. Heterodimer with LFNR2. Interacts with PGRL1A and PGRL1B. Interacts with TIC62. Component of high molecular weight thylakoid LFNRs-containing protein complexes containing LIR1, LFNR1, LFNR2, TIC62 and TROL proteins. Interacts directly with LIR1 and TIC62; LIR1 increases the affinity of LFNR1 and LFNR2 for TIC62. Binds to YCF54 in chloroplasts. FAD is required as a cofactor. May form interchain disulfide bonds with LIR1. In terms of tissue distribution, expressed in shoots. Restricted to green tissues, being more abundant in siliques.

The protein resides in the plastid. The protein localises to the chloroplast stroma. It localises to the chloroplast thylakoid membrane. The enzyme catalyses 2 reduced [2Fe-2S]-[ferredoxin] + NADP(+) + H(+) = 2 oxidized [2Fe-2S]-[ferredoxin] + NADPH. The protein operates within energy metabolism; photosynthesis. In terms of biological role, plays a key role in regulating the relative amounts of cyclic and non-cyclic electron flow to meet the demands of the plant for ATP and reducing power. Probable electron donor required for the MgProto monomethylester (MgProtoME) cyclase complex reaction to form protochlorophyllide, thus connecting chlorophyll synthesis with photosynthetic activity. The protein is Ferredoxin--NADP reductase, leaf isozyme 1, chloroplastic of Arabidopsis thaliana (Mouse-ear cress).